A 104-amino-acid polypeptide reads, in one-letter code: UPF0145 protein RD1_2695 (104 aa).

This sequence belongs to the UPF0145 family.

The sequence is that of UPF0145 protein RD1_2695 from Roseobacter denitrificans (strain ATCC 33942 / OCh 114) (Erythrobacter sp. (strain OCh 114)).